The chain runs to 143 residues: Large ribosomal subunit protein uL13 (143 aa).

Belongs to the universal ribosomal protein uL13 family. As to quaternary structure, part of the 50S ribosomal subunit.

Functionally, this protein is one of the early assembly proteins of the 50S ribosomal subunit, although it is not seen to bind rRNA by itself. It is important during the early stages of 50S assembly. The sequence is that of Large ribosomal subunit protein uL13 from Dehalococcoides mccartyi (strain ATCC BAA-2100 / JCM 16839 / KCTC 5957 / BAV1).